We begin with the raw amino-acid sequence, 493 residues long: Galactose-1-phosphate uridylyltransferase (493 aa).

The protein belongs to the galactose-1-phosphate uridylyltransferase type 2 family.

Its subcellular location is the cytoplasm. The catalysed reaction is alpha-D-galactose 1-phosphate + UDP-alpha-D-glucose = alpha-D-glucose 1-phosphate + UDP-alpha-D-galactose. It participates in carbohydrate metabolism; galactose metabolism. This is Galactose-1-phosphate uridylyltransferase from Streptococcus thermophilus (strain CNRZ 1066).